Reading from the N-terminus, the 341-residue chain is Holliday junction branch migration complex subunit RuvB (341 aa).

The large ATPase domain (RuvB-L) stretch occupies residues 1 to 182 (MKDRLISAVA…FGVISRLEYY (182 aa)). Residues L21, R22, G63, K66, T67, T68, 129-131 (EDY), R172, Y182, and R219 contribute to the ATP site. T67 is a Mg(2+) binding site. The interval 183–253 (RPEDLVLIVN…VAVEALKFLE (71 aa)) is small ATPAse domain (RuvB-S). Residues 256-341 (PLGLDFADRR…REETDQVSLW (86 aa)) are head domain (RuvB-H). Positions 311 and 316 each coordinate DNA.

Belongs to the RuvB family. As to quaternary structure, homohexamer. Forms an RuvA(8)-RuvB(12)-Holliday junction (HJ) complex. HJ DNA is sandwiched between 2 RuvA tetramers; dsDNA enters through RuvA and exits via RuvB. An RuvB hexamer assembles on each DNA strand where it exits the tetramer. Each RuvB hexamer is contacted by two RuvA subunits (via domain III) on 2 adjacent RuvB subunits; this complex drives branch migration. In the full resolvosome a probable DNA-RuvA(4)-RuvB(12)-RuvC(2) complex forms which resolves the HJ.

The protein resides in the cytoplasm. It carries out the reaction ATP + H2O = ADP + phosphate + H(+). In terms of biological role, the RuvA-RuvB-RuvC complex processes Holliday junction (HJ) DNA during genetic recombination and DNA repair, while the RuvA-RuvB complex plays an important role in the rescue of blocked DNA replication forks via replication fork reversal (RFR). RuvA specifically binds to HJ cruciform DNA, conferring on it an open structure. The RuvB hexamer acts as an ATP-dependent pump, pulling dsDNA into and through the RuvAB complex. RuvB forms 2 homohexamers on either side of HJ DNA bound by 1 or 2 RuvA tetramers; 4 subunits per hexamer contact DNA at a time. Coordinated motions by a converter formed by DNA-disengaged RuvB subunits stimulates ATP hydrolysis and nucleotide exchange. Immobilization of the converter enables RuvB to convert the ATP-contained energy into a lever motion, pulling 2 nucleotides of DNA out of the RuvA tetramer per ATP hydrolyzed, thus driving DNA branch migration. The RuvB motors rotate together with the DNA substrate, which together with the progressing nucleotide cycle form the mechanistic basis for DNA recombination by continuous HJ branch migration. Branch migration allows RuvC to scan DNA until it finds its consensus sequence, where it cleaves and resolves cruciform DNA. The polypeptide is Holliday junction branch migration complex subunit RuvB (Pelotomaculum thermopropionicum (strain DSM 13744 / JCM 10971 / SI)).